Reading from the N-terminus, the 799-residue chain is 1,4-alpha-glucan-branching enzyme 2, chloroplastic/amyloplastic (799 aa).

The transit peptide at 1–57 directs the protein to the chloroplast; it reads MAFRVSGAVLGGAVRAPRLTGGGEGSLVFRHTGLFLTRGARVGCSGTHGAMRAAAAA. (1,4-alpha-D-glucosyl)n is bound by residues Trp196 and Lys232. Asp447 functions as the Nucleophile in the catalytic mechanism. Glu502 functions as the Proton donor in the catalytic mechanism.

Belongs to the glycosyl hydrolase 13 family. GlgB subfamily. In terms of assembly, monomer.

It localises to the plastid. Its subcellular location is the chloroplast. The protein resides in the amyloplast. It catalyses the reaction Transfers a segment of a (1-&gt;4)-alpha-D-glucan chain to a primary hydroxy group in a similar glucan chain.. The protein operates within glycan biosynthesis; starch biosynthesis. Its function is as follows. Catalyzes the formation of the alpha-1,6-glucosidic linkages in starch by scission of a 1,4-alpha-linked oligosaccharide from growing alpha-1,4-glucan chains and the subsequent attachment of the oligosaccharide to the alpha-1,6 position. This chain is 1,4-alpha-glucan-branching enzyme 2, chloroplastic/amyloplastic (SBE1), found in Zea mays (Maize).